We begin with the raw amino-acid sequence, 305 residues long: Tyrosine recombinase XerC (305 aa).

Residues 4-95 (TQIQELIIKW…AIKNFYKFLE (92 aa)) form the Core-binding (CB) domain. One can recognise a Tyr recombinase domain in the interval 116–298 (LLPKALSEEE…SIKHLETAYV (183 aa)). Catalysis depends on residues R159, K182, H250, R253, and H276. Catalysis depends on Y285, which acts as the O-(3'-phospho-DNA)-tyrosine intermediate.

The protein belongs to the 'phage' integrase family. XerC subfamily. Forms a cyclic heterotetrameric complex composed of two molecules of XerC and two molecules of XerD.

The protein resides in the cytoplasm. Its function is as follows. Site-specific tyrosine recombinase, which acts by catalyzing the cutting and rejoining of the recombining DNA molecules. The XerC-XerD complex is essential to convert dimers of the bacterial chromosome into monomers to permit their segregation at cell division. It also contributes to the segregational stability of plasmids. In Rickettsia bellii (strain RML369-C), this protein is Tyrosine recombinase XerC.